We begin with the raw amino-acid sequence, 182 residues long: ATP synthase subunit b (182 aa).

Residues Val25 to Phe45 form a helical membrane-spanning segment.

It belongs to the ATPase B chain family. In terms of assembly, F-type ATPases have 2 components, F(1) - the catalytic core - and F(0) - the membrane proton channel. F(1) has five subunits: alpha(3), beta(3), gamma(1), delta(1), epsilon(1). F(0) has three main subunits: a(1), b(2) and c(10-14). The alpha and beta chains form an alternating ring which encloses part of the gamma chain. F(1) is attached to F(0) by a central stalk formed by the gamma and epsilon chains, while a peripheral stalk is formed by the delta and b chains.

It is found in the cell membrane. F(1)F(0) ATP synthase produces ATP from ADP in the presence of a proton or sodium gradient. F-type ATPases consist of two structural domains, F(1) containing the extramembraneous catalytic core and F(0) containing the membrane proton channel, linked together by a central stalk and a peripheral stalk. During catalysis, ATP synthesis in the catalytic domain of F(1) is coupled via a rotary mechanism of the central stalk subunits to proton translocation. In terms of biological role, component of the F(0) channel, it forms part of the peripheral stalk, linking F(1) to F(0). In Arthrobacter sp. (strain FB24), this protein is ATP synthase subunit b.